Here is a 976-residue protein sequence, read N- to C-terminus: Vacuolar membrane protease (976 aa).

Residues 1-15 (MKLKSVFRSVLKYRK) are Cytoplasmic-facing. The helical transmembrane segment at 16 to 36 (TNLSLLLLITYSIITLLYIFD) threads the bilayer. Over 37 to 359 (HERYKLNLPK…KFFVISAKTL (323 aa)) the chain is Vacuolar. 2 N-linked (GlcNAc...) asparagine glycosylation sites follow: Asn96 and Asn121. Zn(2+) contacts are provided by His156 and Asp168. An N-linked (GlcNAc...) asparagine glycan is attached at Asn189. Glu200 serves as the catalytic Proton acceptor. Glu201 is a binding site for Zn(2+). N-linked (GlcNAc...) asparagine glycans are attached at residues Asn212 and Asn217. Positions 226 and 300 each coordinate Zn(2+). A helical transmembrane segment spans residues 360-380 (FYWNCIFLLVSPVVAIGLYLI). Over 381-392 (SRDRMTWKSHSW) the chain is Cytoplasmic. A helical membrane pass occupies residues 393–412 (LSWTRFPLSLAAGIIVQKLF). Topologically, residues 413–428 (SNDIIRSNPLTFSRNY) are vacuolar. A helical membrane pass occupies residues 429 to 449 (FWPISAFFTQVIFTSYVLINC). At 450–461 (SNFFFPCADMKS) the chain is on the cytoplasmic side. The chain crosses the membrane as a helical span at residues 462–482 (LSIIELFIILWTILLFTSKLL). At 483-496 (YSSDYRYTGLYPLS) the chain is on the vacuolar side. Residues 497-517 (IFFLLSTIAAILRLLALALGM) form a helical membrane-spanning segment. Over 518-627 (RTRKRLGREC…NSLKLEYTDY (110 aa)) the chain is Cytoplasmic. Residues 528 to 610 (RDHHSNYSSH…PLLKGSNSME (83 aa)) are disordered. Over residues 549–558 (NLEQPQDQFT) the composition is skewed to polar residues. Positions 559–570 (SSQDDQASIQDD) are enriched in low complexity. Over residues 582-601 (NVDEDHGMDSSSQQHDERVP) the composition is skewed to basic and acidic residues. A helical membrane pass occupies residues 628-648 (AWIIQFLLIVPIPSFILFNSV). At 649–668 (DVIMDALNHTVQEGSKATFD) the chain is on the vacuolar side. N-linked (GlcNAc...) asparagine glycosylation is present at Asn656. Residues 669 to 689 (VLRFGMVGSILMALPILPFFY) traverse the membrane as a helical segment. Residues 690 to 692 (KVN) lie on the Cytoplasmic side of the membrane. The helical transmembrane segment at 693–713 (YITISLTALLFLISASKTLLV) threads the bilayer. At 714 to 976 (HPFTNSNPLK…LVIVKDAIIL (263 aa)) the chain is on the vacuolar side. N-linked (GlcNAc...) asparagine glycosylation is found at Asn768, Asn796, Asn811, Asn866, and Asn937.

The protein belongs to the peptidase M28 family. Requires Zn(2+) as cofactor.

Its subcellular location is the vacuole membrane. In terms of biological role, may be involved in vacuolar sorting and osmoregulation. The protein is Vacuolar membrane protease of Saccharomyces cerevisiae (strain Lalvin EC1118 / Prise de mousse) (Baker's yeast).